Reading from the N-terminus, the 303-residue chain is Pseudouridine-5'-phosphate glycosidase (303 aa).

The active-site Proton donor is the glutamate 25. Substrate-binding residues include lysine 87 and valine 107. Position 139 (aspartate 139) interacts with Mn(2+). Substrate is bound at residue 141-143; it reads SAD. Residue lysine 160 is the Nucleophile of the active site.

It belongs to the pseudouridine-5'-phosphate glycosidase family. In terms of assembly, homotrimer. Requires Mn(2+) as cofactor.

It carries out the reaction D-ribose 5-phosphate + uracil = psi-UMP + H2O. In terms of biological role, catalyzes the reversible cleavage of pseudouridine 5'-phosphate (PsiMP) to ribose 5-phosphate and uracil. Functions biologically in the cleavage direction, as part of a pseudouridine degradation pathway. The protein is Pseudouridine-5'-phosphate glycosidase of Hahella chejuensis (strain KCTC 2396).